Here is a 527-residue protein sequence, read N- to C-terminus: Aspartokinase (527 aa).

T333 carries the post-translational modification Phosphothreonine. Residues 442–527 (LVGKHMKQYI…RLEQLKRLGI (86 aa)) enclose the ACT domain.

The protein belongs to the aspartokinase family. In terms of assembly, homohexamer. Interacts with FPR1; the interaction is direct, plays a role in feedback inhibition of aspartokinase by threonine, and inhibited by tacrolimus and sirolimus.

It catalyses the reaction L-aspartate + ATP = 4-phospho-L-aspartate + ADP. Its pathway is amino-acid biosynthesis; L-methionine biosynthesis via de novo pathway; L-homoserine from L-aspartate: step 1/3. It functions in the pathway amino-acid biosynthesis; L-threonine biosynthesis; L-threonine from L-aspartate: step 1/5. With respect to regulation, allosterically inhibited by threonine. Functionally, phosphorylates aspartate, the first step in the biosynthesis of amino acids that derive from aspartate (the aspartate family of amino acids), including methioinine and threonine, the latter of which is a precursor to isoleucine. This chain is Aspartokinase (HOM3), found in Saccharomyces cerevisiae (strain ATCC 204508 / S288c) (Baker's yeast).